The sequence spans 1347 residues: Spermatogenesis-associated protein 31A3 (1347 aa).

Residues 23 to 43 (PWVLDIFLTLVFALGFFFLLL) form a helical membrane-spanning segment. Disordered regions lie at residues 55–87 (PSPS…GREC), 108–142 (HLDK…HEPM), 154–235 (SPDP…STLI), 373–397 (EQDT…GPQK), 627–658 (QDES…EAQK), 900–955 (RGIP…REAV), 1084–1161 (VHEE…PSVS), and 1313–1335 (KAVS…SHHH). Basic residues predominate over residues 60 to 82 (GKRKCPVGRRRRPRGRMKNHSLR). The span at 165 to 178 (LASTPSPGPMTTSV) shows a compositional bias: polar residues. Positions 198–211 (PEPPALFPHPPHTP) are enriched in pro residues. Composition is skewed to polar residues over residues 627–651 (QDES…STGE) and 927–948 (LTYS…SSKA). 2 stretches are compositionally biased toward basic and acidic residues: residues 1108 to 1127 (HKSE…RLEG) and 1137 to 1146 (RKTEDTHQDE).

It belongs to the SPATA31 family.

The protein resides in the membrane. Its function is as follows. May play a role in spermatogenesis. The polypeptide is Spermatogenesis-associated protein 31A3 (SPATA31A3) (Homo sapiens (Human)).